We begin with the raw amino-acid sequence, 259 residues long: Aspartate/glutamate leucyltransferase (259 aa).

Belongs to the R-transferase family. Bpt subfamily.

It localises to the cytoplasm. It carries out the reaction N-terminal L-glutamyl-[protein] + L-leucyl-tRNA(Leu) = N-terminal L-leucyl-L-glutamyl-[protein] + tRNA(Leu) + H(+). The catalysed reaction is N-terminal L-aspartyl-[protein] + L-leucyl-tRNA(Leu) = N-terminal L-leucyl-L-aspartyl-[protein] + tRNA(Leu) + H(+). In terms of biological role, functions in the N-end rule pathway of protein degradation where it conjugates Leu from its aminoacyl-tRNA to the N-termini of proteins containing an N-terminal aspartate or glutamate. The polypeptide is Aspartate/glutamate leucyltransferase (Rhizobium meliloti (strain 1021) (Ensifer meliloti)).